We begin with the raw amino-acid sequence, 229 residues long: DNA repair protein RecO (229 aa).

It belongs to the RecO family.

Functionally, involved in DNA repair and RecF pathway recombination. This is DNA repair protein RecO from Legionella pneumophila (strain Paris).